An 86-amino-acid chain; its full sequence is Small ribosomal subunit protein bS18 (86 aa).

The protein belongs to the bacterial ribosomal protein bS18 family. Part of the 30S ribosomal subunit. Forms a tight heterodimer with protein bS6.

Binds as a heterodimer with protein bS6 to the central domain of the 16S rRNA, where it helps stabilize the platform of the 30S subunit. This chain is Small ribosomal subunit protein bS18, found in Herpetosiphon aurantiacus (strain ATCC 23779 / DSM 785 / 114-95).